The following is a 292-amino-acid chain: 4-hydroxybenzoate solanesyltransferase (292 aa).

9 helical membrane passes run L28–L48, P49–N69, V97–T117, P118–K138, V140–W160, W172–A192, V217–L237, P239–L259, and I272–L292.

The protein belongs to the UbiA prenyltransferase family. Mg(2+) is required as a cofactor.

Its subcellular location is the cell inner membrane. It carries out the reaction all-trans-nonaprenyl diphosphate + 4-hydroxybenzoate = 4-hydroxy-3-(all-trans-nonaprenyl)benzoate + diphosphate. Functionally, catalyzes the prenylation of para-hydroxybenzoate (PHB) with an all-trans polyprenyl group. Mediates the second step in the final reaction sequence of plastoquinone-9 (PQ-9) biosynthesis, which is the condensation of the polyisoprenoid side chain with PHB, generating the first membrane-bound Q intermediate 4-hydroxy-3-solanesylbenzoate. This is 4-hydroxybenzoate solanesyltransferase from Synechocystis sp. (strain ATCC 27184 / PCC 6803 / Kazusa).